A 279-amino-acid polypeptide reads, in one-letter code: 4-hydroxy-3-methylbut-2-enyl diphosphate reductase (279 aa).

Cys12 serves as a coordination point for [4Fe-4S] cluster. 2 residues coordinate (2E)-4-hydroxy-3-methylbut-2-enyl diphosphate: His40 and His70. Residues His40 and His70 each coordinate dimethylallyl diphosphate. His40 and His70 together coordinate isopentenyl diphosphate. A [4Fe-4S] cluster-binding site is contributed by Cys92. Residue His119 participates in (2E)-4-hydroxy-3-methylbut-2-enyl diphosphate binding. A dimethylallyl diphosphate-binding site is contributed by His119. Residue His119 coordinates isopentenyl diphosphate. Glu121 serves as the catalytic Proton donor. Thr151 serves as a coordination point for (2E)-4-hydroxy-3-methylbut-2-enyl diphosphate. Cys181 is a [4Fe-4S] cluster binding site. (2E)-4-hydroxy-3-methylbut-2-enyl diphosphate is bound by residues Ser209, Ser210, Asn211, and Ser251. Dimethylallyl diphosphate is bound by residues Ser209, Ser210, Asn211, and Ser251. Isopentenyl diphosphate-binding residues include Ser209, Ser210, Asn211, and Ser251.

Belongs to the IspH family. The cofactor is [4Fe-4S] cluster.

It catalyses the reaction isopentenyl diphosphate + 2 oxidized [2Fe-2S]-[ferredoxin] + H2O = (2E)-4-hydroxy-3-methylbut-2-enyl diphosphate + 2 reduced [2Fe-2S]-[ferredoxin] + 2 H(+). It carries out the reaction dimethylallyl diphosphate + 2 oxidized [2Fe-2S]-[ferredoxin] + H2O = (2E)-4-hydroxy-3-methylbut-2-enyl diphosphate + 2 reduced [2Fe-2S]-[ferredoxin] + 2 H(+). It participates in isoprenoid biosynthesis; dimethylallyl diphosphate biosynthesis; dimethylallyl diphosphate from (2E)-4-hydroxy-3-methylbutenyl diphosphate: step 1/1. The protein operates within isoprenoid biosynthesis; isopentenyl diphosphate biosynthesis via DXP pathway; isopentenyl diphosphate from 1-deoxy-D-xylulose 5-phosphate: step 6/6. Its function is as follows. Catalyzes the conversion of 1-hydroxy-2-methyl-2-(E)-butenyl 4-diphosphate (HMBPP) into a mixture of isopentenyl diphosphate (IPP) and dimethylallyl diphosphate (DMAPP). Acts in the terminal step of the DOXP/MEP pathway for isoprenoid precursor biosynthesis. This Thermotoga neapolitana (strain ATCC 49049 / DSM 4359 / NBRC 107923 / NS-E) protein is 4-hydroxy-3-methylbut-2-enyl diphosphate reductase.